We begin with the raw amino-acid sequence, 1095 residues long: Voltage-gated inwardly rectifying potassium channel KCNH3 (1095 aa).

At 1–228 (MPAMRGLLAP…HCGALRATWD (228 aa)) the chain is on the cytoplasmic side. One can recognise a PAS domain in the interval 18–90 (IATRFDGTHS…QQIRKALDEH (73 aa)). The region spanning 93 to 145 (FKAELILYRKSGLPFWCLLDVIPIKNEKGEVALFLVSHKDISETKNRGGPDNW) is the PAC domain. Basic and acidic residues predominate over residues 137–150 (KNRGGPDNWKERGG). Residues 137-161 (KNRGGPDNWKERGGGRRRYGRAGSK) are disordered. A helical membrane pass occupies residues 229–249 (GFILLATLYVAVTVPYSVCVS). Residues 250–259 (TAREPSAARG) are Extracellular-facing. Residues 260–280 (PPSVCDLAVEVLFILDIVLNF) traverse the membrane as a helical segment. The Cytoplasmic segment spans residues 281–302 (RTTFVSKSGQVVFAPKSICLHY). A helical membrane pass occupies residues 303–323 (VTTWFLLDVIAALPFDLLHAF). At 324-331 (KVNVYVGA) the chain is on the extracellular side. A helical; Voltage-sensor transmembrane segment spans residues 332–352 (HLLKTVRLLRLLRLLPRLDRY). At 353-361 (SQYSAVVLT) the chain is on the cytoplasmic side. Residues 362 to 382 (LLMAVFALLAHWVACVWFYIG) traverse the membrane as a helical segment. The Extracellular portion of the chain corresponds to 383–464 (QQEIESSESE…GGPSLRSAYI (82 aa)). The disordered stretch occupies residues 417–447 (PDGGNSSGQSENCSSSSSSSGSGGGRGSEAN). The span at 419–436 (GGNSSGQSENCSSSSSSS) shows a compositional bias: low complexity. N-linked (GlcNAc...) asparagine glycans are attached at residues Asn-421, Asn-428, and Asn-447. The segment at residues 465–485 (TSLYFALSSLTSVGFGNVSAN) is an intramembrane region (pore-forming). Residues 476 to 481 (SVGFGN) carry the Selectivity filter motif. Over 486 to 490 (TDTEK) the chain is Extracellular. The chain crosses the membrane as a helical span at residues 491-511 (IFSICTMLIGALMHAVVFGNV). The Cytoplasmic portion of the chain corresponds to 512–1095 (TAIIQRMYAR…QWTQEEGTGV (584 aa)). 593–708 (LFEAASRGCL…FAPRFSRGLR (116 aa)) is a binding site for a nucleoside 3',5'-cyclic phosphate. Disordered regions lie at residues 740–823 (EEKE…LPPM), 854–883 (VGQS…PSEA), and 965–1069 (GSVL…PWDP). Residues 784 to 796 (TAPRPRLGGRGRP) show a composition bias toward basic residues. Residues 857 to 872 (SGPECSSSPSPGTESG) are compositionally biased toward low complexity. Residues 974 to 991 (HPRPGQPPPLMAPWPWGP) show a composition bias toward pro residues.

This sequence belongs to the potassium channel family. H (Eag) (TC 1.A.1.20) subfamily. Kv12.2/KCNH3 sub-subfamily. In terms of assembly, the potassium channel is probably composed of a homo- or heterotetrameric complex of pore-forming alpha subunits that can associate with modulating beta subunits. Interacts with KCNE1 and KCNE3; these interactions regulate KCNH3 trafficking to the plasma membrane and its subsequent voltage-gated potassium channel activity. In terms of processing, N-glycosylated. N-glycosylation mediates traffick to the cell membrane but is not necessary for voltage-gated potassium channel activity. Detected in brain, but not in other tissues.

It localises to the cell membrane. It carries out the reaction K(+)(in) = K(+)(out). In terms of biological role, pore-forming (alpha) subunit of a voltage-gated inwardly rectifying potassium channel. Charactherized by a fast rate of activation during depolarization followed by a rapid inactivation at much more depolarized value causing inward rectification due to a C-type inactivation mechanism. Exhibits a rapid recovery from inactivation. This Mus musculus (Mouse) protein is Voltage-gated inwardly rectifying potassium channel KCNH3.